The sequence spans 28 residues: Potassium channel toxin alpha-KTx 9.5 (28 aa).

Intrachain disulfides connect Cys3/Cys19, Cys6/Cys24, and Cys10/Cys26. Val28 is modified (valine amide).

In terms of tissue distribution, expressed by the venom gland.

It is found in the secreted. Its function is as follows. Blocks voltage-gated potassium channels Kv1.1/KCNA1 (IC(50)=145 nM), Kv1.2/KCNA2 (IC(50)=2.5 nM), and Kv1.3/KCNA3 (IC(50)=15). Also inhibits calcium-activated potassium channels (KCa/KCNN). This chain is Potassium channel toxin alpha-KTx 9.5, found in Buthus occitanus tunetanus (Common European scorpion).